Consider the following 348-residue polypeptide: MIEADRLIAASGRDREEVQDRAIRPLSLDEYIGQPVVREQMALFIQAARGRGESLDHTLIFGPPGLGKTTLANIIAHEMGVSVKSTSGPILERPGDLAAMLTNLEPHDVLFIDEIHRLSPVVEEVLYPAMEDFQLDIMIGEGPAARSIKLDLPPFTLVGATTRAGMLTNPLRDRFGIVQRLEFYNDKDLSTIVSRSANILGLAIEDQGAYEIARRARGTPRIANRLLRRVRDYAEVRGKGQITKAVADMALNLLDVDERGFDHSDRRLLLTMIEKFDGGPVGVDNLAAAISEERHTIEDVLEPYLIQQGYIMRTPRGRVVTRHAYLHFGLNIPGRLGEGGDFSGPGDE.

A large ATPase domain (RuvB-L) region spans residues 4-184; sequence ADRLIAASGR…FGIVQRLEFY (181 aa). ATP-binding positions include isoleucine 23, arginine 24, glycine 65, lysine 68, threonine 69, threonine 70, 131 to 133, arginine 174, tyrosine 184, and arginine 221; that span reads EDF. Threonine 69 serves as a coordination point for Mg(2+). A small ATPAse domain (RuvB-S) region spans residues 185–255; it reads NDKDLSTIVS…VADMALNLLD (71 aa). The tract at residues 258 to 348 is head domain (RuvB-H); it reads ERGFDHSDRR…GGDFSGPGDE (91 aa). Positions 294, 313, and 318 each coordinate DNA.

This sequence belongs to the RuvB family. In terms of assembly, homohexamer. Forms an RuvA(8)-RuvB(12)-Holliday junction (HJ) complex. HJ DNA is sandwiched between 2 RuvA tetramers; dsDNA enters through RuvA and exits via RuvB. An RuvB hexamer assembles on each DNA strand where it exits the tetramer. Each RuvB hexamer is contacted by two RuvA subunits (via domain III) on 2 adjacent RuvB subunits; this complex drives branch migration. In the full resolvosome a probable DNA-RuvA(4)-RuvB(12)-RuvC(2) complex forms which resolves the HJ.

It is found in the cytoplasm. The catalysed reaction is ATP + H2O = ADP + phosphate + H(+). In terms of biological role, the RuvA-RuvB-RuvC complex processes Holliday junction (HJ) DNA during genetic recombination and DNA repair, while the RuvA-RuvB complex plays an important role in the rescue of blocked DNA replication forks via replication fork reversal (RFR). RuvA specifically binds to HJ cruciform DNA, conferring on it an open structure. The RuvB hexamer acts as an ATP-dependent pump, pulling dsDNA into and through the RuvAB complex. RuvB forms 2 homohexamers on either side of HJ DNA bound by 1 or 2 RuvA tetramers; 4 subunits per hexamer contact DNA at a time. Coordinated motions by a converter formed by DNA-disengaged RuvB subunits stimulates ATP hydrolysis and nucleotide exchange. Immobilization of the converter enables RuvB to convert the ATP-contained energy into a lever motion, pulling 2 nucleotides of DNA out of the RuvA tetramer per ATP hydrolyzed, thus driving DNA branch migration. The RuvB motors rotate together with the DNA substrate, which together with the progressing nucleotide cycle form the mechanistic basis for DNA recombination by continuous HJ branch migration. Branch migration allows RuvC to scan DNA until it finds its consensus sequence, where it cleaves and resolves cruciform DNA. This Pseudomonas putida (strain ATCC 700007 / DSM 6899 / JCM 31910 / BCRC 17059 / LMG 24140 / F1) protein is Holliday junction branch migration complex subunit RuvB.